The primary structure comprises 264 residues: Small ribosomal subunit protein uS2 (264 aa).

The segment at 222–246 is disordered; sequence GRSENKDEQNEQGEQIAPVTNEEKQ.

The protein belongs to the universal ribosomal protein uS2 family.

The protein is Small ribosomal subunit protein uS2 of Helicobacter hepaticus (strain ATCC 51449 / 3B1).